Consider the following 318-residue polypeptide: NADH-ubiquinone oxidoreductase chain 1 (318 aa).

8 helical membrane passes run 2–22, 69–89, 100–120, 146–166, 171–191, 223–243, 253–273, and 294–314; these read FMIN…FLTL, LMFI…WIPL, LGVL…LWSG, LAII…AMLI, YMWL…STLA, FFLA…ILFF, ELYT…FLWI, and LPLT…TASI.

Belongs to the complex I subunit 1 family. In terms of assembly, core subunit of respiratory chain NADH dehydrogenase (Complex I) which is composed of 45 different subunits.

The protein localises to the mitochondrion inner membrane. It carries out the reaction a ubiquinone + NADH + 5 H(+)(in) = a ubiquinol + NAD(+) + 4 H(+)(out). In terms of biological role, core subunit of the mitochondrial membrane respiratory chain NADH dehydrogenase (Complex I) which catalyzes electron transfer from NADH through the respiratory chain, using ubiquinone as an electron acceptor. Essential for the catalytic activity and assembly of complex I. This chain is NADH-ubiquinone oxidoreductase chain 1 (MT-ND1), found in Felis catus (Cat).